We begin with the raw amino-acid sequence, 406 residues long: Glutamyl-tRNA reductase (406 aa).

Substrate-binding positions include 51–54, S101, 106–108, and Q112; these read TCNR and ESE. The active-site Nucleophile is the C52. 180–185 is a binding site for NADP(+); sequence GAGSIG.

It belongs to the glutamyl-tRNA reductase family. As to quaternary structure, homodimer.

The enzyme catalyses (S)-4-amino-5-oxopentanoate + tRNA(Glu) + NADP(+) = L-glutamyl-tRNA(Glu) + NADPH + H(+). Its pathway is porphyrin-containing compound metabolism; protoporphyrin-IX biosynthesis; 5-aminolevulinate from L-glutamyl-tRNA(Glu): step 1/2. In terms of biological role, catalyzes the NADPH-dependent reduction of glutamyl-tRNA(Glu) to glutamate 1-semialdehyde (GSA). The chain is Glutamyl-tRNA reductase from Caldivirga maquilingensis (strain ATCC 700844 / DSM 13496 / JCM 10307 / IC-167).